Here is a 75-residue protein sequence, read N- to C-terminus: Small ribosomal subunit protein bS21 (75 aa).

Positions 52 to 75 (RRARKLARKRAQREGLIGGRPGAR) are disordered. Positions 53–62 (RARKLARKRA) are enriched in basic residues.

The protein belongs to the bacterial ribosomal protein bS21 family.

In Brucella anthropi (strain ATCC 49188 / DSM 6882 / CCUG 24695 / JCM 21032 / LMG 3331 / NBRC 15819 / NCTC 12168 / Alc 37) (Ochrobactrum anthropi), this protein is Small ribosomal subunit protein bS21.